The sequence spans 203 residues: Guanylate kinase (203 aa).

One can recognise a Guanylate kinase-like domain in the interval 4-183; sequence GKLFVISAPS…ASTLLKSIIW (180 aa). 11–18 serves as a coordination point for ATP; that stretch reads APSGAGKT.

This sequence belongs to the guanylate kinase family.

The protein localises to the cytoplasm. The catalysed reaction is GMP + ATP = GDP + ADP. In terms of biological role, essential for recycling GMP and indirectly, cGMP. This chain is Guanylate kinase, found in Desulfotalea psychrophila (strain LSv54 / DSM 12343).